Consider the following 583-residue polypeptide: L-arabonate dehydratase (583 aa).

Cys-56, Cys-124, and Cys-197 together coordinate [4Fe-4S] cluster.

Belongs to the IlvD/Edd family. Homodimer. Requires [4Fe-4S] cluster as cofactor.

It catalyses the reaction L-arabinonate = 2-dehydro-3-deoxy-L-arabinonate + H2O. Its activity is regulated as follows. Activity is enhanced by Mg(2+), being optimal with a concentration of 1-10 mM Mg(2+). In terms of biological role, catalyzes the dehydration of L-arabonate to L-2-keto-3-deoxyarabonate (L-KDA). Is involved in a degradation pathway of L-arabinose that allows A.brasilense to grow on L-arabinose as a sole carbon source. To a lesser extent, can also use D-xylonate as substrate, but not D-galactonate, D-arabonate, and D-gluconate. The polypeptide is L-arabonate dehydratase (araC) (Azospirillum brasilense).